The following is a 187-amino-acid chain: Large ribosomal subunit protein uL6 (187 aa).

The protein belongs to the universal ribosomal protein uL6 family. Part of the 50S ribosomal subunit.

Functionally, this protein binds to the 23S rRNA, and is important in its secondary structure. It is located near the subunit interface in the base of the L7/L12 stalk, and near the tRNA binding site of the peptidyltransferase center. The polypeptide is Large ribosomal subunit protein uL6 (Roseiflexus sp. (strain RS-1)).